Here is a 117-residue protein sequence, read N- to C-terminus: Phosphoribosyl-ATP pyrophosphatase (117 aa).

Positions 96-105 (GVSGIEEKLS) are enriched in basic and acidic residues. Residues 96–117 (GVSGIEEKLSRSQNQPEPTKAE) are disordered. Polar residues predominate over residues 106–117 (RSQNQPEPTKAE).

It belongs to the PRA-PH family.

Its subcellular location is the cytoplasm. The enzyme catalyses 1-(5-phospho-beta-D-ribosyl)-ATP + H2O = 1-(5-phospho-beta-D-ribosyl)-5'-AMP + diphosphate + H(+). The protein operates within amino-acid biosynthesis; L-histidine biosynthesis; L-histidine from 5-phospho-alpha-D-ribose 1-diphosphate: step 2/9. This Nitrosomonas eutropha (strain DSM 101675 / C91 / Nm57) protein is Phosphoribosyl-ATP pyrophosphatase.